Reading from the N-terminus, the 511-residue chain is Phosphoenolpyruvate carboxylase (511 aa).

The protein belongs to the PEPCase type 2 family. As to quaternary structure, homotetramer. Mg(2+) is required as a cofactor.

It catalyses the reaction oxaloacetate + phosphate = phosphoenolpyruvate + hydrogencarbonate. Allosterically inhibited by L-aspartate and L-malate. PEPC activity is not affected by allosteric activators of E.coli PEPC such as glucose 6-phosphate, fructose 1,6-bisphosphate, and acetyl coenzyme A. Catalyzes the irreversible beta-carboxylation of phosphoenolpyruvate (PEP) to form oxaloacetate (OAA), a four-carbon dicarboxylic acid source for the tricarboxylic acid cycle. This chain is Phosphoenolpyruvate carboxylase, found in Saccharolobus solfataricus (strain ATCC 35092 / DSM 1617 / JCM 11322 / P2) (Sulfolobus solfataricus).